The following is an 88-amino-acid chain: Putative regulatory protein Ava_1474 (88 aa).

This sequence belongs to the RemA family.

The chain is Putative regulatory protein Ava_1474 from Trichormus variabilis (strain ATCC 29413 / PCC 7937) (Anabaena variabilis).